The sequence spans 315 residues: tRNA dimethylallyltransferase (315 aa).

10–17 (GPTAVGKT) is an ATP binding site. 12–17 (TAVGKT) contacts substrate. Residues 35-38 (DSMQ) are interaction with substrate tRNA.

It belongs to the IPP transferase family. In terms of assembly, monomer. The cofactor is Mg(2+).

The catalysed reaction is adenosine(37) in tRNA + dimethylallyl diphosphate = N(6)-dimethylallyladenosine(37) in tRNA + diphosphate. Its function is as follows. Catalyzes the transfer of a dimethylallyl group onto the adenine at position 37 in tRNAs that read codons beginning with uridine, leading to the formation of N6-(dimethylallyl)adenosine (i(6)A). The protein is tRNA dimethylallyltransferase of Geobacillus kaustophilus (strain HTA426).